The following is a 621-amino-acid chain: Glutathione-regulated potassium-efflux system protein KefC (621 aa).

The next 12 helical transmembrane spans lie at 4–24 (HTLI…PIAV), 26–46 (LGLG…PWGL), 54–74 (AILH…GLEL), 90–110 (GALQ…LLGL), 114–134 (VAEL…MQAM), 149–169 (FAVL…IPLL), 178–198 (LVAF…VVAL), 218–238 (VFSA…EEVG), 270–290 (GLLL…GTLV), 294–314 (LRIV…LWLI), 326–346 (RWFA…FGAA), and 359–379 (ALTL…VLLT). Residues 399–518 (QPRVIVAGFG…AGVEAPERET (120 aa)) form the RCK N-terminal domain. Residues 598–621 (GWQGTEEGRHTGDIADEPENKPSA) are disordered.

The protein belongs to the monovalent cation:proton antiporter 2 (CPA2) transporter (TC 2.A.37) family. KefC subfamily. As to quaternary structure, homodimer. Interacts with the regulatory subunit KefF.

The protein localises to the cell inner membrane. Pore-forming subunit of a potassium efflux system that confers protection against electrophiles. Catalyzes K(+)/H(+) antiport. In Klebsiella pneumoniae (strain 342), this protein is Glutathione-regulated potassium-efflux system protein KefC.